We begin with the raw amino-acid sequence, 419 residues long: F-box/LRR-repeat protein At1g67190 (419 aa).

Residues 1–48 enclose the F-box domain; it reads MDYLPVEVIGNILSRLGGARDVVIASATCRKWREACRKHLQTLSFNSA. 9 LRR repeats span residues 53–82, 96–124, 133–157, 158–183, 185–209, 245–272, 273–297, 301–326, and 356–381; these read YRDL…SIMM, WLMY…EICG, LAHN…LSLS, YVSI…ELVS, EIAM…YFDG, HFKL…DVNH, FTMV…RLWD, DDDD…SLSY, and INDV…IIYG.

The sequence is that of F-box/LRR-repeat protein At1g67190 from Arabidopsis thaliana (Mouse-ear cress).